We begin with the raw amino-acid sequence, 243 residues long: tRNA pseudouridine synthase A (243 aa).

Asp-53 acts as the Nucleophile in catalysis. Residue Tyr-111 coordinates substrate.

The protein belongs to the tRNA pseudouridine synthase TruA family. As to quaternary structure, homodimer.

The enzyme catalyses uridine(38/39/40) in tRNA = pseudouridine(38/39/40) in tRNA. In terms of biological role, formation of pseudouridine at positions 38, 39 and 40 in the anticodon stem and loop of transfer RNAs. The polypeptide is tRNA pseudouridine synthase A (Chlorobium phaeovibrioides (strain DSM 265 / 1930) (Prosthecochloris vibrioformis (strain DSM 265))).